The chain runs to 169 residues: Sorting nexin-24 (169 aa).

The residue at position 1 (M1) is an N-acetylmethionine. In terms of domain architecture, PX spans 1–125; the sequence is MEVYIPSFRH…SFDETESEES (125 aa). A 1,2-diacyl-sn-glycero-3-phospho-(1D-myo-inositol-3-phosphate)-binding residues include R38, S40, K61, and R74. S113 and S116 each carry phosphoserine.

The protein belongs to the sorting nexin family.

It localises to the cytoplasmic vesicle membrane. Functionally, may be involved in several stages of intracellular trafficking. This Rattus norvegicus (Rat) protein is Sorting nexin-24 (Snx24).